An 885-amino-acid chain; its full sequence is Alpha-actinin (885 aa).

The interval 1–242 (MTQDGYMQQE…IMTYVSWYYH (242 aa)) is actin-binding. 2 Calponin-homology (CH) domains span residues 26–130 (KQQR…LRFA) and 139–245 (MTAK…HAFH). Spectrin repeat units follow at residues 270-377 (LMEE…EEWL), 389-494 (HLAQ…ALDE), 508-614 (EFAK…HTLQ), and 626-727 (LRRQ…NEVE). 2 EF-hand domains span residues 741–776 (EQLN…LGYN) and 780–815 (DDRP…EYTD). Residues Asp-754, Thr-758, Arg-760, Glu-765, Asp-793, Asn-795, Thr-797, and Tyr-799 each contribute to the Ca(2+) site.

This sequence belongs to the alpha-actinin family. In terms of assembly, homodimer; antiparallel.

Its function is as follows. F-actin cross-linking protein which is thought to anchor actin to a variety of intracellular structures. This is a bundling protein. This Dermatophagoides farinae (American house dust mite) protein is Alpha-actinin.